Consider the following 541-residue polypeptide: Glutamyl-tRNA(Gln) amidotransferase subunit B, mitochondrial (541 aa).

It belongs to the GatB/GatE family. GatB subfamily. Subunit of the heterotrimeric GatFAB amidotransferase (AdT) complex, composed of A (HER2), B (PET112) and F (YGR102C) subunits.

It is found in the mitochondrion. It catalyses the reaction L-glutamyl-tRNA(Gln) + L-glutamine + ATP + H2O = L-glutaminyl-tRNA(Gln) + L-glutamate + ADP + phosphate + H(+). In terms of biological role, allows the formation of correctly charged Gln-tRNA(Gln) through the transamidation of misacylated Glu-tRNA(Gln) in the mitochondria. The reaction takes place in the presence of glutamine and ATP through an activated gamma-phospho-Glu-tRNA(Gln). This chain is Glutamyl-tRNA(Gln) amidotransferase subunit B, mitochondrial, found in Saccharomyces cerevisiae (strain ATCC 204508 / S288c) (Baker's yeast).